The primary structure comprises 375 residues: Phytanoyl-CoA hydroxylase-interacting protein-like (375 aa).

3 positions are modified to phosphoserine: serine 11, serine 12, and serine 15. An N-linked (GlcNAc...) asparagine glycan is attached at asparagine 22. The residue at position 24 (serine 24) is a Phosphoserine. A glycan (N-linked (GlcNAc...) asparagine) is linked at asparagine 36. The 110-residue stretch at 51–160 (VPHNIKINNI…EIIEFCTADY (110 aa)) folds into the Fibronectin type-III domain.

It belongs to the PHYHIP family.

In terms of biological role, may play a role in the development of the central system. This Rattus norvegicus (Rat) protein is Phytanoyl-CoA hydroxylase-interacting protein-like (Phyhipl).